Consider the following 239-residue polypeptide: Probable transcriptional regulatory protein RBAM_007230 (239 aa).

It belongs to the TACO1 family. YeeN subfamily.

It localises to the cytoplasm. The sequence is that of Probable transcriptional regulatory protein RBAM_007230 from Bacillus velezensis (strain DSM 23117 / BGSC 10A6 / LMG 26770 / FZB42) (Bacillus amyloliquefaciens subsp. plantarum).